The following is a 381-amino-acid chain: Creatine kinase M-type (381 aa).

The Phosphagen kinase N-terminal domain occupies 11-98; that stretch reads KLNYKPEEEY…FDPIIQDRHG (88 aa). Residues 125–367 enclose the Phosphagen kinase C-terminal domain; sequence YVLSSRVRTG…KLMVEMEKKL (243 aa). An ATP-binding site is contributed by 128 to 132; that stretch reads SSRVR. At S164 the chain carries Phosphoserine. Residue T166 is modified to Phosphothreonine. Phosphoserine is present on S178. At T180 the chain carries Phosphothreonine. H191 is a binding site for ATP. Phosphoserine is present on S199. R236 and R292 together coordinate ATP. Phosphothreonine is present on residues T313 and T322. Residues 320-325 and D335 each bind ATP; that span reads RGTGGV. S372 is modified (phosphoserine).

This sequence belongs to the ATP:guanido phosphotransferase family. As to quaternary structure, dimer of identical or non-identical chains, which can be either B (brain type) or M (muscle type). With MM being the major form in skeletal muscle and myocardium, MB existing in myocardium, and BB existing in many tissues, especially brain.

Its subcellular location is the cytoplasm. It carries out the reaction creatine + ATP = N-phosphocreatine + ADP + H(+). In terms of biological role, reversibly catalyzes the transfer of phosphate between ATP and various phosphogens (e.g. creatine phosphate). Creatine kinase isoenzymes play a central role in energy transduction in tissues with large, fluctuating energy demands, such as skeletal muscle, heart, brain and spermatozoa. The polypeptide is Creatine kinase M-type (CKM) (Canis lupus familiaris (Dog)).